A 199-amino-acid polypeptide reads, in one-letter code: Protein GrpE (199 aa).

Positions 1–24 (MSKQNKKDWKKFKDEHKEEHKVEN) are enriched in basic and acidic residues. Residues 1–47 (MSKQNKKDWKKFKDEHKEEHKVENEILEEEIDEKSQHQEPALGHPSY) are disordered.

It belongs to the GrpE family. Homodimer.

The protein localises to the cytoplasm. Functionally, participates actively in the response to hyperosmotic and heat shock by preventing the aggregation of stress-denatured proteins, in association with DnaK and GrpE. It is the nucleotide exchange factor for DnaK and may function as a thermosensor. Unfolded proteins bind initially to DnaJ; upon interaction with the DnaJ-bound protein, DnaK hydrolyzes its bound ATP, resulting in the formation of a stable complex. GrpE releases ADP from DnaK; ATP binding to DnaK triggers the release of the substrate protein, thus completing the reaction cycle. Several rounds of ATP-dependent interactions between DnaJ, DnaK and GrpE are required for fully efficient folding. In Legionella pneumophila (strain Paris), this protein is Protein GrpE.